The chain runs to 544 residues: Cytochrome P450 monooxygenase notG' (544 aa).

Residues 1 to 22 (MELPFSAMSLLYLLVGIAGVIS) form the signal peptide. A run of 2 helical transmembrane segments spans residues 42–62 (WYTLIITAPTVVVSIVWGLPL) and 66–86 (AKATGGWALTYFAGLYTSLLL). 2 N-linked (GlcNAc...) asparagine glycosylation sites follow: asparagine 226 and asparagine 404. Position 487 (cysteine 487) interacts with heme.

This sequence belongs to the cytochrome P450 family. Requires heme as cofactor.

The protein localises to the membrane. The protein operates within alkaloid biosynthesis. Its function is as follows. Cytochrome P450 monooxygenase; part of the gene cluster that mediates the biosynthesis of notoamide, a fungal indole alkaloid that belongs to a family of natural products containing a characteristic bicyclo[2.2.2]diazaoctane core. The first step of notoamide biosynthesis involves coupling of L-proline and L-tryptophan by the bimodular NRPS notE', to produce cyclo-L-tryptophan-L-proline called brevianamide F. The reverse prenyltransferase notF' then acts as a deoxybrevianamide E synthase and converts brevianamide F to deoxybrevianamide E via reverse prenylation at C-2 of the indole ring leading to the bicyclo[2.2.2]diazaoctane core. Deoxybrevianamide E is further hydroxylated at C-6 of the indole ring, likely catalyzed by the cytochrome P450 monooxygenase notG', to yield 6-hydroxy-deoxybrevianamide E. 6-hydroxy-deoxybrevianamide E is a specific substrate of the prenyltransferase notC' for normal prenylation at C-7 to produce 6-hydroxy-7-prenyl-deoxybrevianamide, also called notoamide S. As the proposed pivotal branching point in notoamide biosynthesis, notoamide S can be diverted to notoamide E through an oxidative pyran ring closure putatively catalyzed by either notH' cytochrome P450 monooxygenase or the notD' FAD-linked oxidoreductase. This step would be followed by an indole 2,3-epoxidation-initiated pinacol-like rearrangement catalyzed by the notB' FAD-dependent monooxygenase leading to the formation of notoamide C and notoamide D. On the other hand notoamide S is converted to notoamide T by notH' (or notD'), a bifunctional oxidase that also functions as the intramolecular Diels-Alderase responsible for generation of (-)-notoamide T. To generate antipodal (+)-notoaminide T, notH (or notD) in Aspergillus strain MF297-2 is expected to catalyze a Diels-Alder reaction leading to the opposite stereochemistry. The remaining oxidoreductase notD' (or notH') likely catalyzes the oxidative pyran ring formation to yield (-)-stephacidin A. The FAD-dependent monooxygenase notI' is highly similar to notB' and is predicted to catalyze a similar conversion from (-)-stephacidin A to (+)-notoamide B via the 2,3-epoxidation of (-)-stephacidin A followed by a pinacol-type rearrangement. Finally, it remains unclear which enzyme could be responsible for the final hydroxylation steps leading to notoamide A and sclerotiamide. The protein is Cytochrome P450 monooxygenase notG' of Aspergillus versicolor.